A 321-amino-acid polypeptide reads, in one-letter code: Aspartate carbamoyltransferase catalytic subunit (321 aa).

Residues R65 and T66 each coordinate carbamoyl phosphate. K93 is an L-aspartate binding site. Residues R115, H143, and Q146 each contribute to the carbamoyl phosphate site. L-aspartate is bound by residues R176 and R230. Carbamoyl phosphate is bound by residues G271 and P272.

The protein belongs to the aspartate/ornithine carbamoyltransferase superfamily. ATCase family. Heterododecamer (2C3:3R2) of six catalytic PyrB chains organized as two trimers (C3), and six regulatory PyrI chains organized as three dimers (R2).

It carries out the reaction carbamoyl phosphate + L-aspartate = N-carbamoyl-L-aspartate + phosphate + H(+). It functions in the pathway pyrimidine metabolism; UMP biosynthesis via de novo pathway; (S)-dihydroorotate from bicarbonate: step 2/3. Functionally, catalyzes the condensation of carbamoyl phosphate and aspartate to form carbamoyl aspartate and inorganic phosphate, the committed step in the de novo pyrimidine nucleotide biosynthesis pathway. This chain is Aspartate carbamoyltransferase catalytic subunit, found in Bartonella quintana (strain Toulouse) (Rochalimaea quintana).